The following is a 155-amino-acid chain: Large ribosomal subunit protein uL22 (155 aa).

It belongs to the universal ribosomal protein uL22 family. As to quaternary structure, part of the 50S ribosomal subunit.

Functionally, this protein binds specifically to 23S rRNA. It makes multiple contacts with different domains of the 23S rRNA in the assembled 50S subunit and ribosome. In terms of biological role, the globular domain of the protein is located near the polypeptide exit tunnel on the outside of the subunit, while an extended beta-hairpin is found that lines the wall of the exit tunnel in the center of the 70S ribosome. The sequence is that of Large ribosomal subunit protein uL22 from Pyrococcus horikoshii (strain ATCC 700860 / DSM 12428 / JCM 9974 / NBRC 100139 / OT-3).